The following is a 1028-amino-acid chain: Protein SMAX1-LIKE 5 (1028 aa).

The Clp R domain maps to 8–199 (IQQTLTTEAA…CVEDCSVSSV (192 aa)). Repeat stretches follow at residues 12-102 (LTTE…LNRL) and 116-199 (LANA…VSSV). An EAR motif is present at residues 871-875 (LDLNI).

Belongs to the ClpA/ClpB family. As to quaternary structure, interacts probably with TPL/TPR in an EAR-motif dependent manner. In terms of tissue distribution, detected in roots, seedlings and axillary branches.

May function in a transcriptional corepressor complex. This Arabidopsis thaliana (Mouse-ear cress) protein is Protein SMAX1-LIKE 5.